A 505-amino-acid polypeptide reads, in one-letter code: Putative ribose/galactose/methyl galactoside import ATP-binding protein 1 (505 aa).

ABC transporter domains are found at residues leucine 10 to serine 245 and arginine 256 to glycine 501. Position 42–49 (glycine 42–serine 49) interacts with ATP.

The protein belongs to the ABC transporter superfamily. Carbohydrate importer 2 (CUT2) (TC 3.A.1.2) family.

It is found in the cell inner membrane. The enzyme catalyses D-ribose(out) + ATP + H2O = D-ribose(in) + ADP + phosphate + H(+). It catalyses the reaction D-galactose(out) + ATP + H2O = D-galactose(in) + ADP + phosphate + H(+). Its function is as follows. Part of an ABC transporter complex involved in carbohydrate import. Could be involved in ribose, galactose and/or methyl galactoside import. Responsible for energy coupling to the transport system. This is Putative ribose/galactose/methyl galactoside import ATP-binding protein 1 from Agrobacterium fabrum (strain C58 / ATCC 33970) (Agrobacterium tumefaciens (strain C58)).